Here is a 378-residue protein sequence, read N- to C-terminus: Succinyl-diaminopimelate desuccinylase (378 aa).

A Zn(2+)-binding site is contributed by H68. Residue D70 is part of the active site. Residue D101 participates in Zn(2+) binding. E135 (proton acceptor) is an active-site residue. Zn(2+) is bound by residues E136, E164, and H350.

This sequence belongs to the peptidase M20A family. DapE subfamily. In terms of assembly, homodimer. Requires Zn(2+) as cofactor. The cofactor is Co(2+).

The enzyme catalyses N-succinyl-(2S,6S)-2,6-diaminopimelate + H2O = (2S,6S)-2,6-diaminopimelate + succinate. Its pathway is amino-acid biosynthesis; L-lysine biosynthesis via DAP pathway; LL-2,6-diaminopimelate from (S)-tetrahydrodipicolinate (succinylase route): step 3/3. Its function is as follows. Catalyzes the hydrolysis of N-succinyl-L,L-diaminopimelic acid (SDAP), forming succinate and LL-2,6-diaminopimelate (DAP), an intermediate involved in the bacterial biosynthesis of lysine and meso-diaminopimelic acid, an essential component of bacterial cell walls. This is Succinyl-diaminopimelate desuccinylase from Vibrio campbellii (strain ATCC BAA-1116).